The following is a 167-amino-acid chain: Probable chemoreceptor glutamine deamidase CheD (167 aa).

Belongs to the CheD family.

It catalyses the reaction L-glutaminyl-[protein] + H2O = L-glutamyl-[protein] + NH4(+). In terms of biological role, probably deamidates glutamine residues to glutamate on methyl-accepting chemotaxis receptors (MCPs), playing an important role in chemotaxis. This is Probable chemoreceptor glutamine deamidase CheD from Natronomonas pharaonis (strain ATCC 35678 / DSM 2160 / CIP 103997 / JCM 8858 / NBRC 14720 / NCIMB 2260 / Gabara) (Halobacterium pharaonis).